The following is a 67-amino-acid chain: Large ribosomal subunit protein bL32 (67 aa).

The segment covering 1–20 (MAVPKRKMSRSNTRARRAKW) has biased composition (basic residues). The tract at residues 1-24 (MAVPKRKMSRSNTRARRAKWKATA) is disordered.

The protein belongs to the bacterial ribosomal protein bL32 family.

The sequence is that of Large ribosomal subunit protein bL32 from Renibacterium salmoninarum (strain ATCC 33209 / DSM 20767 / JCM 11484 / NBRC 15589 / NCIMB 2235).